The following is a 314-amino-acid chain: Oxidoreductase NAD-binding domain-containing protein 1 (314 aa).

A signal peptide spans 1–18 (MALVAGSAAYQVLRGVTG). The 104-residue stretch at 63–166 (EIISPAKVCE…VGGEFCFDPQ (104 aa)) folds into the FAD-binding FR-type domain. Residue 180-185 (GVGINP) coordinates NAD(+).

This chain is Oxidoreductase NAD-binding domain-containing protein 1 (oxnad1), found in Xenopus tropicalis (Western clawed frog).